Consider the following 476-residue polypeptide: E1B 55 kDa protein (476 aa).

Disordered stretches follow at residues 1–20 and 42–95; these read MERP…GNGS and FGSS…KMEN. Phosphoserine occurs at positions 472 and 473.

This sequence belongs to the adenoviridae E1B 55 kDa protein family. In terms of assembly, interacts with host PML-4 and PML-5; this interaction promotes efficient subnuclear targeting of E1B-55K to PML nuclear bodies. Interacts with E4-ORF3 protein. Interacts with E4-ORF6 protein.

Its subcellular location is the host nucleus. The protein resides in the host cytoplasm. Plays a major role to prevent cellular inhibition of viral genome replication. Assembles an SCF-like E3 ubiquitin ligase complex based on the cellular proteins ELOB, ELOC, CUL5 and RBX1, in cooperation with viral E4orf6. This viral RING-type ligase ubiquitinates cellular substrates and targets them to proteasomal degradation: TP53/p53, LIG4, MRE11-RAD50-NBS1 (MRN) complex, ITGA3, DAXX and BLM. E1B-55K probably acts as the substrate-specific adapter of the SCF-like E3 ubiquitin ligase complex. Degradation of host TP53/p53 activity is essential for preventing E1A-induced TP53 accumulation that would otherwise lead to cell apoptosis and growth arrest. E1B-55K also inactivates TP53 transcription-factor activity by binding its transactivation domain. E1B-55K also functions as a SUMO1 E3 ligase for TP53 which causes the latter to be sequestered in promyelocytic leukemia (PML) nuclear bodies thereby contributing to maximal inhibition of TP53 function. The polypeptide is E1B 55 kDa protein (Human adenovirus F serotype 40 (HAdV-40)).